A 367-amino-acid polypeptide reads, in one-letter code: Uroporphyrinogen decarboxylase (367 aa).

Position 1 is an N-acetylmethionine (methionine 1). 8 residues coordinate coproporphyrinogen I: arginine 37, alanine 39, arginine 41, arginine 50, aspartate 86, tyrosine 164, serine 219, and histidine 339. 3 residues coordinate coproporphyrinogen III: arginine 37, alanine 39, and arginine 41. Aspartate 86, tyrosine 164, serine 219, and histidine 339 together coordinate coproporphyrinogen III.

The protein belongs to the uroporphyrinogen decarboxylase family. As to quaternary structure, homodimer.

It is found in the cytoplasm. It localises to the cytosol. The catalysed reaction is uroporphyrinogen III + 4 H(+) = coproporphyrinogen III + 4 CO2. It catalyses the reaction uroporphyrinogen I + 4 H(+) = coproporphyrinogen I + 4 CO2. Its pathway is porphyrin-containing compound metabolism; protoporphyrin-IX biosynthesis; coproporphyrinogen-III from 5-aminolevulinate: step 4/4. Its function is as follows. Catalyzes the sequential decarboxylation of the four acetate side chains of uroporphyrinogen to form coproporphyrinogen and participates in the fifth step in the heme biosynthetic pathway. Isomer I or isomer III of uroporphyrinogen may serve as substrate, but only coproporphyrinogen III can ultimately be converted to heme. In vitro also decarboxylates pentacarboxylate porphyrinogen I. This is Uroporphyrinogen decarboxylase from Mus musculus (Mouse).